Reading from the N-terminus, the 166-residue chain is Probable DHNTP pyrophosphohydrolase (166 aa).

The region spanning 42–166 (DLQLSASALV…FKKYYRYKNI (125 aa)) is the Nudix hydrolase domain. Positions 73-94 (GHVELKESPLDTAIREFHEETG) match the Nudix box motif. Residues glutamate 88 and glutamate 92 each coordinate Mg(2+).

Belongs to the Nudix hydrolase family. In terms of assembly, monomer. Mg(2+) serves as cofactor.

It participates in cofactor biosynthesis; tetrahydrofolate biosynthesis; 2-amino-4-hydroxy-6-hydroxymethyl-7,8-dihydropteridine diphosphate from 7,8-dihydroneopterin triphosphate: step 1/4. Probably mediates the removal of pyrophosphate from dihydroneopterin triphosphate (DHNTP), a possible step in the pterin branch of the folate synthesis pathway. The polypeptide is Probable DHNTP pyrophosphohydrolase (folQ) (Lactococcus lactis subsp. cremoris (strain MG1363)).